Here is a 494-residue protein sequence, read N- to C-terminus: Acetyl-coenzyme A carboxylase carboxyl transferase subunit beta, chloroplastic (494 aa).

Positions 226–494 constitute a CoA carboxyltransferase N-terminal domain; it reads LWVQCENCYG…VPLNQNETEH (269 aa). The Zn(2+) site is built by C230, C233, C249, and C252. Residues 230-252 form a C4-type zinc finger; the sequence is CENCYGLNYKKFLKSKMNICEQC.

The protein belongs to the AccD/PCCB family. Acetyl-CoA carboxylase is a heterohexamer composed of biotin carboxyl carrier protein, biotin carboxylase and 2 subunits each of ACCase subunit alpha and ACCase plastid-coded subunit beta (accD). Zn(2+) serves as cofactor.

The protein localises to the plastid. It is found in the chloroplast stroma. The catalysed reaction is N(6)-carboxybiotinyl-L-lysyl-[protein] + acetyl-CoA = N(6)-biotinyl-L-lysyl-[protein] + malonyl-CoA. It participates in lipid metabolism; malonyl-CoA biosynthesis; malonyl-CoA from acetyl-CoA: step 1/1. Functionally, component of the acetyl coenzyme A carboxylase (ACC) complex. Biotin carboxylase (BC) catalyzes the carboxylation of biotin on its carrier protein (BCCP) and then the CO(2) group is transferred by the transcarboxylase to acetyl-CoA to form malonyl-CoA. This Coffea arabica (Arabian coffee) protein is Acetyl-coenzyme A carboxylase carboxyl transferase subunit beta, chloroplastic.